The sequence spans 393 residues: 1-deoxy-D-xylulose 5-phosphate reductoisomerase (393 aa).

6 residues coordinate NADPH: T10, G11, S12, I13, R37, and N124. K125 is a binding site for 1-deoxy-D-xylulose 5-phosphate. E126 lines the NADPH pocket. A Mn(2+)-binding site is contributed by D150. 1-deoxy-D-xylulose 5-phosphate-binding residues include S151, E152, S182, and H205. E152 provides a ligand contact to Mn(2+). Residue G211 participates in NADPH binding. 1-deoxy-D-xylulose 5-phosphate contacts are provided by S218, N223, K224, and E227. E227 is a Mn(2+) binding site.

It belongs to the DXR family. Mg(2+) is required as a cofactor. It depends on Mn(2+) as a cofactor.

It catalyses the reaction 2-C-methyl-D-erythritol 4-phosphate + NADP(+) = 1-deoxy-D-xylulose 5-phosphate + NADPH + H(+). Its pathway is isoprenoid biosynthesis; isopentenyl diphosphate biosynthesis via DXP pathway; isopentenyl diphosphate from 1-deoxy-D-xylulose 5-phosphate: step 1/6. In terms of biological role, catalyzes the NADPH-dependent rearrangement and reduction of 1-deoxy-D-xylulose-5-phosphate (DXP) to 2-C-methyl-D-erythritol 4-phosphate (MEP). The polypeptide is 1-deoxy-D-xylulose 5-phosphate reductoisomerase (Nitrosococcus oceani (strain ATCC 19707 / BCRC 17464 / JCM 30415 / NCIMB 11848 / C-107)).